The chain runs to 355 residues: Ataxin-3-like protein (355 aa).

Residues 1-180 (MDFIFHEKQE…DCEADQLLQI (180 aa)) enclose the Josephin domain. Catalysis depends on Cys14, which acts as the Nucleophile. Catalysis depends on His119, which acts as the Proton acceptor. Asn134 is an active-site residue. 2 disordered regions span residues 209-230 (LEKV…EDFQ) and 253-331 (LSMQ…DISE). Residues 215–228 (ESDESGTSDQDEED) are compositionally biased toward acidic residues. 2 UIM domains span residues 224–243 (QDEE…TNRE) and 244–258 (DEHL…MQGS). The segment covering 253 to 276 (LSMQGSSGNTSQDLPKTSCVTPAS) has biased composition (polar residues). Positions 278-293 (QPKKIKEDYFEKHQQE) are enriched in basic and acidic residues.

In terms of tissue distribution, widely expressed.

The protein localises to the nucleus. The catalysed reaction is Thiol-dependent hydrolysis of ester, thioester, amide, peptide and isopeptide bonds formed by the C-terminal Gly of ubiquitin (a 76-residue protein attached to proteins as an intracellular targeting signal).. Deubiquitinating enzyme that cleaves both 'Lys-48'-linked and 'Lys-63'-linked poly-ubiquitin chains (in vitro). Acts as a deubiquitinating enzyme for the transcription factor KLF5, playing a role in the regulation of KLF5 stability. This is Ataxin-3-like protein from Homo sapiens (Human).